The chain runs to 196 residues: Putative NADH dehydrogenase/NAD(P)H nitroreductase XOO4023 (196 aa).

The protein belongs to the nitroreductase family. HadB/RutE subfamily. FMN is required as a cofactor.

This Xanthomonas oryzae pv. oryzae (strain MAFF 311018) protein is Putative NADH dehydrogenase/NAD(P)H nitroreductase XOO4023.